Here is a 208-residue protein sequence, read N- to C-terminus: Protein-L-isoaspartate O-methyltransferase (208 aa).

Residue serine 59 is part of the active site.

This sequence belongs to the methyltransferase superfamily. L-isoaspartyl/D-aspartyl protein methyltransferase family.

The protein resides in the cytoplasm. It carries out the reaction [protein]-L-isoaspartate + S-adenosyl-L-methionine = [protein]-L-isoaspartate alpha-methyl ester + S-adenosyl-L-homocysteine. In terms of biological role, catalyzes the methyl esterification of L-isoaspartyl residues in peptides and proteins that result from spontaneous decomposition of normal L-aspartyl and L-asparaginyl residues. It plays a role in the repair and/or degradation of damaged proteins. This chain is Protein-L-isoaspartate O-methyltransferase, found in Vibrio campbellii (strain ATCC BAA-1116).